A 350-amino-acid polypeptide reads, in one-letter code: Phospho-N-acetylmuramoyl-pentapeptide-transferase (350 aa).

A run of 9 helical transmembrane segments spans residues 28 to 48, 70 to 90, 100 to 120, 136 to 156, 164 to 184, 195 to 215, 221 to 241, 249 to 269, and 328 to 348; these read LPLLIAAVCATATAAVGIPLL, GTPTMGGLLVVPVGVVLGSLI, LLSLAVLTLAFMLIGGIDDWS, LLLQAMATAAFLAIAAWQGWI, FGLELPLGLMIWPLGLFVVLA, LDGLASGCGALVFTGLALQLM, GDPALAGFCMAMAGAWLGFLV, AFMGDTGSLAMGAALSGVALL, and QSVVPAFWLVTAGLVLLGLVL.

It belongs to the glycosyltransferase 4 family. MraY subfamily. The cofactor is Mg(2+).

The protein localises to the cell inner membrane. The catalysed reaction is UDP-N-acetyl-alpha-D-muramoyl-L-alanyl-gamma-D-glutamyl-meso-2,6-diaminopimeloyl-D-alanyl-D-alanine + di-trans,octa-cis-undecaprenyl phosphate = di-trans,octa-cis-undecaprenyl diphospho-N-acetyl-alpha-D-muramoyl-L-alanyl-D-glutamyl-meso-2,6-diaminopimeloyl-D-alanyl-D-alanine + UMP. It participates in cell wall biogenesis; peptidoglycan biosynthesis. Functionally, catalyzes the initial step of the lipid cycle reactions in the biosynthesis of the cell wall peptidoglycan: transfers peptidoglycan precursor phospho-MurNAc-pentapeptide from UDP-MurNAc-pentapeptide onto the lipid carrier undecaprenyl phosphate, yielding undecaprenyl-pyrophosphoryl-MurNAc-pentapeptide, known as lipid I. The chain is Phospho-N-acetylmuramoyl-pentapeptide-transferase from Synechococcus sp. (strain CC9605).